Reading from the N-terminus, the 83-residue chain is Delta-conotoxin-like Ac6.2 (83 aa).

Positions 1-22 are cleaved as a signal peptide; sequence MKLTCVVIVAVLFLTAWTFVTA. The propeptide occupies 23-51; it reads DDSRYGLKNLFPKARHEMKNPEASKLNKR. Intrachain disulfides connect Cys54-Cys69, Cys61-Cys73, and Cys68-Cys78. Residues Pro57 and Pro65 each carry the 4-hydroxyproline modification.

This sequence belongs to the conotoxin O1 superfamily. As to expression, expressed by the venom duct.

The protein localises to the secreted. Functionally, delta-conotoxins bind to site 6 of voltage-gated sodium channels (Nav) and inhibit the inactivation process. This chain is Delta-conotoxin-like Ac6.2, found in Conus achatinus (Little frog cone).